A 461-amino-acid polypeptide reads, in one-letter code: Bifunctional protein GlmU (461 aa).

Residues 1-232 (MNLQIIILAA…SFEVQGINNR (232 aa)) are pyrophosphorylase. Residues 8–11 (LAAG), Lys22, Gln73, and 78–79 (GT) each bind UDP-N-acetyl-alpha-D-glucosamine. Asp102 contributes to the Mg(2+) binding site. UDP-N-acetyl-alpha-D-glucosamine is bound by residues Gly142, Glu157, and Asn230. Asn230 contributes to the Mg(2+) binding site. A linker region spans residues 233–253 (QQLQQLERTWQQRAANQLMEK). An N-acetyltransferase region spans residues 254 to 461 (GATLADANRF…WKRPVKRERD (208 aa)). 2 residues coordinate UDP-N-acetyl-alpha-D-glucosamine: Arg336 and Lys354. His366 (proton acceptor) is an active-site residue. UDP-N-acetyl-alpha-D-glucosamine-binding residues include Tyr369 and Asn380. Acetyl-CoA contacts are provided by residues Ala383, 389 to 390 (NY), Ser408, and Ala426.

This sequence in the N-terminal section; belongs to the N-acetylglucosamine-1-phosphate uridyltransferase family. It in the C-terminal section; belongs to the transferase hexapeptide repeat family. As to quaternary structure, homotrimer. Mg(2+) is required as a cofactor.

The protein resides in the cytoplasm. The enzyme catalyses alpha-D-glucosamine 1-phosphate + acetyl-CoA = N-acetyl-alpha-D-glucosamine 1-phosphate + CoA + H(+). It catalyses the reaction N-acetyl-alpha-D-glucosamine 1-phosphate + UTP + H(+) = UDP-N-acetyl-alpha-D-glucosamine + diphosphate. It participates in nucleotide-sugar biosynthesis; UDP-N-acetyl-alpha-D-glucosamine biosynthesis; N-acetyl-alpha-D-glucosamine 1-phosphate from alpha-D-glucosamine 6-phosphate (route II): step 2/2. It functions in the pathway nucleotide-sugar biosynthesis; UDP-N-acetyl-alpha-D-glucosamine biosynthesis; UDP-N-acetyl-alpha-D-glucosamine from N-acetyl-alpha-D-glucosamine 1-phosphate: step 1/1. The protein operates within bacterial outer membrane biogenesis; LPS lipid A biosynthesis. Functionally, catalyzes the last two sequential reactions in the de novo biosynthetic pathway for UDP-N-acetylglucosamine (UDP-GlcNAc). The C-terminal domain catalyzes the transfer of acetyl group from acetyl coenzyme A to glucosamine-1-phosphate (GlcN-1-P) to produce N-acetylglucosamine-1-phosphate (GlcNAc-1-P), which is converted into UDP-GlcNAc by the transfer of uridine 5-monophosphate (from uridine 5-triphosphate), a reaction catalyzed by the N-terminal domain. This Legionella pneumophila (strain Paris) protein is Bifunctional protein GlmU.